Here is a 118-residue protein sequence, read N- to C-terminus: Large ribosomal subunit protein uL24 (118 aa).

It belongs to the universal ribosomal protein uL24 family. Part of the 50S ribosomal subunit.

Functionally, one of two assembly initiator proteins, it binds directly to the 5'-end of the 23S rRNA, where it nucleates assembly of the 50S subunit. One of the proteins that surrounds the polypeptide exit tunnel on the outside of the subunit. The polypeptide is Large ribosomal subunit protein uL24 (Prochlorococcus marinus (strain MIT 9215)).